Here is a 353-residue protein sequence, read N- to C-terminus: Ribosomal RNA large subunit methyltransferase M (353 aa).

S-adenosyl-L-methionine is bound by residues serine 179, 212–215, aspartate 231, aspartate 251, and aspartate 267; that span reads APGG. Lysine 296 (proton acceptor) is an active-site residue.

Belongs to the class I-like SAM-binding methyltransferase superfamily. RNA methyltransferase RlmE family. RlmM subfamily. In terms of assembly, monomer.

It localises to the cytoplasm. It catalyses the reaction cytidine(2498) in 23S rRNA + S-adenosyl-L-methionine = 2'-O-methylcytidine(2498) in 23S rRNA + S-adenosyl-L-homocysteine + H(+). Its function is as follows. Catalyzes the 2'-O-methylation at nucleotide C2498 in 23S rRNA. This is Ribosomal RNA large subunit methyltransferase M from Laribacter hongkongensis (strain HLHK9).